The chain runs to 93 residues: Putative hemolysin E-like protein (93 aa).

Belongs to the hemolysin E family.

The polypeptide is Putative hemolysin E-like protein (Escherichia coli O6:H1 (strain CFT073 / ATCC 700928 / UPEC)).